The following is a 2151-amino-acid chain: RNA-directed RNA polymerase L (2151 aa).

Positions 36, 54, 97, 110, and 111 each coordinate Mn(2+). K124 functions as the For endonuclease activity in the catalytic mechanism. The 187-residue stretch at 956-1142 folds into the RdRp catalytic domain; the sequence is NGKFIRMKRK…SVNTEMWKSM (187 aa). D1099 provides a ligand contact to Mg(2+).

It belongs to the Bunyavirales RNA polymerase family. As to quaternary structure, interacts with the viral nucleoprotein. Mn(2+) serves as cofactor. The cofactor is Mg(2+).

It is found in the host cytoplasm. The protein resides in the host perinuclear region. The enzyme catalyses RNA(n) + a ribonucleoside 5'-triphosphate = RNA(n+1) + diphosphate. Its function is as follows. RNA-dependent RNA polymerase, which is responsible for the replication and transcription of the viral RNA genome using antigenomic RNA as an intermediate. During transcription, synthesizes subgenomic RNAs and assures their capping by a cap-snatching mechanism, which involves the endonuclease activity cleaving the host capped pre-mRNAs. These short capped RNAs are then used as primers for viral transcription. Cleaves ssRNA substrates but not DNA. Seems to downregulate the expression of its own and heterologous mRNAs through its endonuclease activity. This chain is RNA-directed RNA polymerase L, found in Apodemus agrarius (Eurasian field mouse).